The chain runs to 397 residues: Digeranylgeranylglycerophospholipid reductase (397 aa).

Ala-15, Glu-34, Cys-45, Gly-46, Gly-48, Arg-101, Ala-125, Glu-163, Asp-284, Gly-296, and Ile-297 together coordinate FAD. A 2,3-bis-O-(geranylgeranyl)-sn-glycerol 1-phospholipid-binding residues include Lys-339 and Val-375.

Belongs to the geranylgeranyl reductase family. DGGGPL reductase subfamily. FAD serves as cofactor.

It carries out the reaction 2,3-bis-O-(phytanyl)-sn-glycerol 1-phosphate + 8 NADP(+) = 2,3-bis-O-(geranylgeranyl)-sn-glycerol 1-phosphate + 8 NADPH + 8 H(+). The catalysed reaction is 2,3-bis-O-(phytanyl)-sn-glycerol 1-phosphate + 8 NAD(+) = 2,3-bis-O-(geranylgeranyl)-sn-glycerol 1-phosphate + 8 NADH + 8 H(+). The enzyme catalyses a 2,3-bis-O-phytanyl-sn-glycerol 1-phospholipid + 8 A = a 2,3-bis-O-(geranylgeranyl)-sn-glycerol 1-phospholipid + 8 AH2. It catalyses the reaction CDP-2,3-bis-O-(geranylgeranyl)-sn-glycerol + 8 AH2 = CDP-2,3-bis-O-(phytanyl)-sn-glycerol + 8 A. It carries out the reaction archaetidylserine + 8 AH2 = 2,3-bis-O-phytanyl-sn-glycero-3-phospho-L-serine + 8 A. It functions in the pathway membrane lipid metabolism; glycerophospholipid metabolism. Is involved in the reduction of 2,3-digeranylgeranylglycerophospholipids (unsaturated archaeols) into 2,3-diphytanylglycerophospholipids (saturated archaeols) in the biosynthesis of archaeal membrane lipids. Catalyzes the formation of archaetidic acid (2,3-di-O-phytanyl-sn-glyceryl phosphate) from 2,3-di-O-geranylgeranylglyceryl phosphate (DGGGP) via the hydrogenation of each double bond of the isoprenoid chains. Is also probably able to reduce double bonds of geranyl groups in CDP-2,3-bis-O-(geranylgeranyl)-sn-glycerol and archaetidylserine, thus acting at various stages in the biosynthesis of archaeal membrane lipids. The protein is Digeranylgeranylglycerophospholipid reductase of Picrophilus torridus (strain ATCC 700027 / DSM 9790 / JCM 10055 / NBRC 100828 / KAW 2/3).